A 584-amino-acid chain; its full sequence is Pectinesterase 1 (584 aa).

The first 42 residues, 1-42 (MTHIKEFFTKLSESSSNQNISNIPKKKKKLFLALFATLLVVA), serve as a signal peptide directing secretion. Residues asparagine 108, asparagine 129, and asparagine 226 are each glycosylated (N-linked (GlcNAc...) asparagine). Substrate-binding residues include threonine 348 and glutamine 378. The active-site Proton donor is aspartate 401. Cysteine 415 and cysteine 435 form a disulfide bridge. Aspartate 422 serves as the catalytic Nucleophile. Arginine 490 and tryptophan 492 together coordinate substrate.

This sequence in the N-terminal section; belongs to the PMEI family. It in the C-terminal section; belongs to the pectinesterase family. Expressed at high levels in flower buds, shoots and young leaves, and at lower levels in young fruit, young bark and juice vesicles. Not expressed at significant levels in leaf abscission zones following ethylene treatment or in mature leaves. In fruit abscission zones, expression was initially undetectable but increased markedly following ethylene treatment.

Its subcellular location is the secreted. It localises to the cell wall. The enzyme catalyses [(1-&gt;4)-alpha-D-galacturonosyl methyl ester](n) + n H2O = [(1-&gt;4)-alpha-D-galacturonosyl](n) + n methanol + n H(+). It functions in the pathway glycan metabolism; pectin degradation; 2-dehydro-3-deoxy-D-gluconate from pectin: step 1/5. Its function is as follows. Acts in the modification of cell walls via demethylesterification of cell wall pectin. This is Pectinesterase 1 (PECS-1.1) from Citrus sinensis (Sweet orange).